The sequence spans 339 residues: Phosphoribosylformylglycinamidine cyclo-ligase (339 aa).

Belongs to the AIR synthase family.

The protein resides in the cytoplasm. The enzyme catalyses 2-formamido-N(1)-(5-O-phospho-beta-D-ribosyl)acetamidine + ATP = 5-amino-1-(5-phospho-beta-D-ribosyl)imidazole + ADP + phosphate + H(+). It participates in purine metabolism; IMP biosynthesis via de novo pathway; 5-amino-1-(5-phospho-D-ribosyl)imidazole from N(2)-formyl-N(1)-(5-phospho-D-ribosyl)glycinamide: step 2/2. This chain is Phosphoribosylformylglycinamidine cyclo-ligase, found in Fusobacterium nucleatum subsp. nucleatum (strain ATCC 25586 / DSM 15643 / BCRC 10681 / CIP 101130 / JCM 8532 / KCTC 2640 / LMG 13131 / VPI 4355).